The sequence spans 616 residues: ATP-dependent zinc metalloprotease FtsH 3 (616 aa).

Topologically, residues 1–9 (MSKNNKKWR) are cytoplasmic. A helical membrane pass occupies residues 10–30 (NAGLYALLLIVVLALASAFFD). Residues 31–108 (RPTQTRETLS…VQPQSDEGFW (78 aa)) are Lumenal-facing. The helical transmembrane segment at 109 to 129 (FRIASTLFLPILLLVGIFFLF) threads the bilayer. Residues 130–616 (RRAQSGPGSQ…NNNAKLALLV (487 aa)) are Cytoplasmic-facing. Residue 201 to 208 (GPPGTGKT) coordinates ATP. Position 423 (His423) interacts with Zn(2+). Glu424 is an active-site residue. Positions 427 and 504 each coordinate Zn(2+).

This sequence in the central section; belongs to the AAA ATPase family. The protein in the C-terminal section; belongs to the peptidase M41 family. Homohexamer (Potential). Part of a large complex that includes FtsH2 and PSII. Coimmunoprecipitates with YidC. Zn(2+) serves as cofactor.

Its subcellular location is the cellular thylakoid membrane. Acts as a processive, ATP-dependent zinc metallopeptidase for both cytoplasmic and membrane proteins. Plays a role in the quality control of integral membrane proteins. This Synechocystis sp. (strain ATCC 27184 / PCC 6803 / Kazusa) protein is ATP-dependent zinc metalloprotease FtsH 3.